A 970-amino-acid polypeptide reads, in one-letter code: Protein bicaudal C homolog 1-B (970 aa).

The disordered stretch occupies residues 1 to 50; the sequence is MAAQCGGYMNQSDPGSNSERSADSPLPGSEDDSPGSAAPHDPEWREERFR. A compositionally biased stretch (polar residues) spans 9 to 19; sequence MNQSDPGSNSE. Residues 40–50 are compositionally biased toward basic and acidic residues; that stretch reads HDPEWREERFR. 2 KH domains span residues 130 to 197 and 282 to 346; these read RVTL…RVRI and PVST…RQYL. The segment covering 596–605 has biased composition (polar residues); that stretch reads EASRQSNNHS. Disordered stretches follow at residues 596-638, 677-696, and 773-841; these read EASR…SANT, SDSE…APGS, and RRAN…NKSA. Residues 606 to 616 show a composition bias toward basic and acidic residues; the sequence is SAEEVNSKTDS. Polar residues-rich tracts occupy residues 783–810 and 819–831; these read TMST…GSDS and IDSS…SSIG. An SAM domain is found at 869–932; the sequence is FKGSDLPELF…LLAISELNKN (64 aa).

This sequence belongs to the BicC family.

Putative RNA-binding protein. May be involved in regulating gene expression during embryonic development. Seems to be involved in endoderm formation. Ectopic expression results in endoderm formation in the absence of mesoderm induction. The protein is Protein bicaudal C homolog 1-B (bicc1-b) of Xenopus laevis (African clawed frog).